Consider the following 209-residue polypeptide: High frequency lysogenization protein HflD homolog (209 aa).

The protein belongs to the HflD family.

It localises to the cytoplasm. Its subcellular location is the cell inner membrane. This Proteus mirabilis (strain HI4320) protein is High frequency lysogenization protein HflD homolog.